Here is a 570-residue protein sequence, read N- to C-terminus: Glycine--tRNA ligase (570 aa).

Positions 99 and 165 each coordinate substrate. ATP-binding positions include 197-199 (RNE), 207-212 (LRLREF), 324-325 (EC), and 443-446 (GIDR). 212 to 216 (FSQAE) is a substrate binding site. Residue 439–443 (EPSFG) participates in substrate binding.

It belongs to the class-II aminoacyl-tRNA synthetase family.

The protein resides in the cytoplasm. It catalyses the reaction tRNA(Gly) + glycine + ATP = glycyl-tRNA(Gly) + AMP + diphosphate. Its function is as follows. Catalyzes the attachment of glycine to tRNA(Gly). This chain is Glycine--tRNA ligase, found in Thermococcus sibiricus (strain DSM 12597 / MM 739).